Reading from the N-terminus, the 157-residue chain is Endoribonuclease YbeY (157 aa).

Residues His121, His125, and His131 each coordinate Zn(2+).

The protein belongs to the endoribonuclease YbeY family. Zn(2+) serves as cofactor.

The protein localises to the cytoplasm. Functionally, single strand-specific metallo-endoribonuclease involved in late-stage 70S ribosome quality control and in maturation of the 3' terminus of the 16S rRNA. In Salinispora tropica (strain ATCC BAA-916 / DSM 44818 / JCM 13857 / NBRC 105044 / CNB-440), this protein is Endoribonuclease YbeY.